A 247-amino-acid chain; its full sequence is MNVLLCYINTLNRFYDISAVEVGQHFYWQIGDFQVHAQVLITSWVVIAILLISTILVVRNPQTIPTSGQNFFEYVLEFIRDVSKTQIGEEYGPWVPFIGTLFLFIFVSNWSGALLPWKIIKLPHGELAAPTNDINTTVALALLTSVAYFYAGISKKGLAYFGKYIQPTPILLPINILEDFTKPLSLSFRLFGNILADELVVVVLVSLVPLVVPIPVMFLGLFTSGIQALIFATLAAAYIGESMEGHH.

The next 5 helical transmembrane spans lie at Gln-38–Val-58, Val-95–Leu-115, Ile-134–Ser-154, Leu-199–Leu-219, and Gly-220–Gly-240.

This sequence belongs to the ATPase A chain family. As to quaternary structure, F-type ATPases have 2 components, CF(1) - the catalytic core - and CF(0) - the membrane proton channel. CF(1) has five subunits: alpha(3), beta(3), gamma(1), delta(1), epsilon(1). CF(0) has four main subunits: a, b, b' and c.

The protein resides in the plastid. It is found in the chloroplast thylakoid membrane. Key component of the proton channel; it plays a direct role in the translocation of protons across the membrane. The chain is ATP synthase subunit a, chloroplastic from Pisum sativum (Garden pea).